We begin with the raw amino-acid sequence, 489 residues long: Bridging integrator 2 (489 aa).

In terms of domain architecture, BAR spans 28 to 244; that stretch reads VLQKLGKTVE…MSKLEKQHSN (217 aa). Residues 267–302 are compositionally biased toward low complexity; the sequence is QSCAASSPVSPVSPVSPVTSPTSPSATSEPESVSAT. The disordered stretch occupies residues 267–489; the sequence is QSCAASSPVS…ASGGLVGLFL (223 aa). Phosphoserine is present on Ser-273. Positions 311-331 are enriched in acidic residues; that stretch reads GGEDSCESQESLKDEEADEAQ. Ser-357 carries the phosphoserine modification. The span at 358–368 shows a compositional bias: low complexity; that stretch reads QEEALSSSAQS. 9 positions are modified to phosphoserine: Ser-380, Ser-392, Ser-420, Ser-422, Ser-424, Ser-430, Ser-435, Ser-439, and Ser-443.

In terms of assembly, homodimer. Interacts with BIN1. Interacts with ARHGEF6 (via SH3 domain), ARHGEF7 (via SH3 domain), SH3GL1, SH3GL2 and SH3GL3. Identified in a complex with ARHGEF6 and GIT2.

The protein resides in the cytoplasm. It localises to the cell projection. It is found in the podosome membrane. Its subcellular location is the cell cortex. The protein localises to the phagocytic cup. Its function is as follows. Promotes cell motility and migration, probably via its interaction with the cell membrane and with podosome proteins that mediate interaction with the cytoskeleton. Modulates membrane curvature and mediates membrane tubulation. Inhibits phagocytosis. Plays a role in podosome formation. The chain is Bridging integrator 2 (Bin2) from Mus musculus (Mouse).